We begin with the raw amino-acid sequence, 107 residues long: L-rhamnose mutarotase (107 aa).

Y18 is a substrate binding site. H22 acts as the Proton donor in catalysis. Residues Y41 and 76–77 each bind substrate; that span reads WW.

Belongs to the rhamnose mutarotase family. Homodimer.

It localises to the cytoplasm. It catalyses the reaction alpha-L-rhamnose = beta-L-rhamnose. Its pathway is carbohydrate metabolism; L-rhamnose metabolism. Functionally, involved in the anomeric conversion of L-rhamnose. This Paraburkholderia xenovorans (strain LB400) protein is L-rhamnose mutarotase.